The primary structure comprises 249 residues: PF03932 family protein CutC (249 aa).

The protein belongs to the CutC family.

It localises to the cytoplasm. In Bacteroides thetaiotaomicron (strain ATCC 29148 / DSM 2079 / JCM 5827 / CCUG 10774 / NCTC 10582 / VPI-5482 / E50), this protein is PF03932 family protein CutC.